We begin with the raw amino-acid sequence, 498 residues long: Aspartyl/glutamyl-tRNA(Asn/Gln) amidotransferase subunit B (498 aa).

The protein belongs to the GatB/GatE family. GatB subfamily. As to quaternary structure, heterotrimer of A, B and C subunits.

It carries out the reaction L-glutamyl-tRNA(Gln) + L-glutamine + ATP + H2O = L-glutaminyl-tRNA(Gln) + L-glutamate + ADP + phosphate + H(+). The enzyme catalyses L-aspartyl-tRNA(Asn) + L-glutamine + ATP + H2O = L-asparaginyl-tRNA(Asn) + L-glutamate + ADP + phosphate + 2 H(+). Allows the formation of correctly charged Asn-tRNA(Asn) or Gln-tRNA(Gln) through the transamidation of misacylated Asp-tRNA(Asn) or Glu-tRNA(Gln) in organisms which lack either or both of asparaginyl-tRNA or glutaminyl-tRNA synthetases. The reaction takes place in the presence of glutamine and ATP through an activated phospho-Asp-tRNA(Asn) or phospho-Glu-tRNA(Gln). The chain is Aspartyl/glutamyl-tRNA(Asn/Gln) amidotransferase subunit B from Erythrobacter litoralis (strain HTCC2594).